The sequence spans 491 residues: Chromosomal replication initiator protein DnaA (491 aa).

The interval 1–69 (MTTWDKCLKK…TIQECHGNDL (69 aa)) is domain I, interacts with DnaA modulators. Residues 69–154 (LIIEYSNKKF…KEDEEYSFGL (86 aa)) form a domain II region. Residues 155 to 371 (PLKEKYVFDS…GALNRVLTTS (217 aa)) are domain III, AAA+ region. Residues glycine 199, glycine 201, lysine 202, and threonine 203 each contribute to the ATP site. The segment at 372–491 (KFNHKDPTIE…YELLLDKISR (120 aa)) is domain IV, binds dsDNA.

This sequence belongs to the DnaA family. As to quaternary structure, oligomerizes as a right-handed, spiral filament on DNA at oriC.

It localises to the cytoplasm. In terms of biological role, plays an essential role in the initiation and regulation of chromosomal replication. ATP-DnaA binds to the origin of replication (oriC) to initiate formation of the DNA replication initiation complex once per cell cycle. Binds the DnaA box (a 9 base pair repeat at the origin) and separates the double-stranded (ds)DNA. Forms a right-handed helical filament on oriC DNA; dsDNA binds to the exterior of the filament while single-stranded (ss)DNA is stabiized in the filament's interior. The ATP-DnaA-oriC complex binds and stabilizes one strand of the AT-rich DNA unwinding element (DUE), permitting loading of DNA polymerase. After initiation quickly degrades to an ADP-DnaA complex that is not apt for DNA replication. Binds acidic phospholipids. The chain is Chromosomal replication initiator protein DnaA from Francisella tularensis subsp. novicida (strain U112).